A 4083-amino-acid polypeptide reads, in one-letter code: Dynein heavy chain, cytoplasmic (4083 aa).

Positions 1 to 1745 (MTDDQVAQAL…TIEQSCVSFC (1745 aa)) are stem. Coiled coils occupy residues 127–166 (DAVV…FIEV), 381–402 (INQW…MRKR), and 801–821 (KLDL…VDQA). 4 AAA regions span residues 1746-1967 (YGFE…VLRN), 2026-2265 (SYLA…YKAD), 2373-2622 (SLES…WVRG), and 2716-2980 (TFAE…GNSQ). Residues 1784–1791 (GPAGTGKT), 2064–2071 (GDAGTGKT), 2412–2419 (GPPGSGKT), and 2754–2761 (GPNYSGKT) each bind ATP. The interval 2987-3294 (LTSLRRFQSL…RSIKLMESLT (308 aa)) is stalk. 3 coiled-coil regions span residues 3015–3085 (LEKL…NERR), 3223–3302 (LKEE…RWIK), and 3527–3607 (LEKE…VEDL). AAA stretches follow at residues 3364 to 3592 (MVNP…EIAK) and 3748 to 3952 (LKSL…FLDH).

It belongs to the dynein heavy chain family. As to quaternary structure, consists of at least two heavy chains and a number of intermediate and light chains.

It is found in the cytoplasm. The protein resides in the cytoskeleton. Functionally, cytoplasmic dynein acts as a motor for the intracellular retrograde motility of vesicles and organelles along microtubules. Dynein has ATPase activity; the force-producing power stroke is thought to occur on release of ADP. Required to maintain uniform nuclear distribution in hyphae. May play an important role in the proper orientation of the mitotic spindle into the budding daughter cell yeast. Probably required for normal progression of the cell cycle. The polypeptide is Dynein heavy chain, cytoplasmic (DYN1) (Eremothecium gossypii (strain ATCC 10895 / CBS 109.51 / FGSC 9923 / NRRL Y-1056) (Yeast)).